The following is an 810-amino-acid chain: Protein 4.1 (810 aa).

Residues 1–124 (MTTEKSLVAE…KEIEFGTSLD (124 aa)) form a disordered region. Position 14 is a phosphoserine (Ser14). Position 61 is a phosphothreonine (Thr61). Positions 62-76 (PTHEDLTKNKERTSE) are enriched in basic and acidic residues. Residues Ser85, Ser86, Ser96, Ser105, Ser122, Ser150, Ser152, Ser153, Ser189, and Ser192 each carry the phosphoserine modification. Over residues 102-118 (DVESAKEKCEGGQKEIE) the composition is skewed to basic and acidic residues. The interval 152–203 (SSAETQPAQEEHREDPDFETKEGGGLEECSKIEVKEESPESKAERELKASQK) is disordered. Over residues 160–200 (QEEHREDPDFETKEGGGLEECSKIEVKEESPESKAERELKA) the composition is skewed to basic and acidic residues. In terms of domain architecture, FERM spans 211 to 492 (MHCKVSLLDD…EHHTFFRLTS (282 aa)). The residue at position 223 (Tyr223) is a Phosphotyrosine. Thr379 carries the post-translational modification Phosphothreonine. The segment at 518 to 613 (TRQASALIDR…DQAEPEPTEV (96 aa)) is disordered. 4 positions are modified to phosphoserine: Ser522, Ser541, Ser543, and Ser555. The segment covering 587-601 (AQKETVKDEEKKEEG) has biased composition (basic and acidic residues). Residues 615–659 (KDLDKSQEEIKKHHASISELKKNFMESVPEPRPSEWDKRLSTHSP) are spectrin--actin-binding. Ser620, Ser630, Ser655, and Ser658 each carry phosphoserine. Residues 660 to 810 (FRTLNINGQL…VHQETEISEE (151 aa)) are C-terminal (CTD). Phosphothreonine is present on residues Thr682 and Thr805.

As to quaternary structure, binds with a high affinity to glycophorin and with lower affinity to band III protein. Associates with the nuclear mitotic apparatus. Binds calmodulin, CPAP and DLG1. Also found to associate with contractile apparatus and tight junctions. Interacts with NUMA1; this interaction is negatively regulated by CDK1 during metaphase and promotes for anaphase-specific localization of NUMA1 in symmetrically dividing cells. Interacts with ATP2B1; regulates small intestinal calcium absorption through regulation of membrane expression of ATP2B1. O-glycosylated; contains N-acetylglucosamine side chains in the C-terminal domain. In terms of processing, phosphorylated at multiple sites by different protein kinases and each phosphorylation event selectively modulates the protein's functions.

The protein resides in the nucleus. It localises to the cytoplasm. It is found in the cytoskeleton. Its subcellular location is the cell cortex. Functionally, protein 4.1 is a major structural element of the erythrocyte membrane skeleton. It plays a key role in regulating membrane physical properties of mechanical stability and deformability by stabilizing spectrin-actin interaction. Recruits DLG1 to membranes. Required for dynein-dynactin complex and NUMA1 recruitment at the mitotic cell cortex during anaphase. In Canis lupus familiaris (Dog), this protein is Protein 4.1.